Here is a 681-residue protein sequence, read N- to C-terminus: DNA ligase (681 aa).

NAD(+)-binding positions include 45–49 (DFDFD), 94–95 (SL), and E120. K122 functions as the N6-AMP-lysine intermediate in the catalytic mechanism. NAD(+) contacts are provided by R143, E177, K289, and K313. The Zn(2+) site is built by C403, C406, C421, and C426. Residues 593 to 681 (ADQQPFAGQS…SLKIDFKNLI (89 aa)) form the BRCT domain.

This sequence belongs to the NAD-dependent DNA ligase family. LigA subfamily. Mg(2+) is required as a cofactor. Requires Mn(2+) as cofactor.

The catalysed reaction is NAD(+) + (deoxyribonucleotide)n-3'-hydroxyl + 5'-phospho-(deoxyribonucleotide)m = (deoxyribonucleotide)n+m + AMP + beta-nicotinamide D-nucleotide.. In terms of biological role, DNA ligase that catalyzes the formation of phosphodiester linkages between 5'-phosphoryl and 3'-hydroxyl groups in double-stranded DNA using NAD as a coenzyme and as the energy source for the reaction. It is essential for DNA replication and repair of damaged DNA. This Leptospira interrogans serogroup Icterohaemorrhagiae serovar copenhageni (strain Fiocruz L1-130) protein is DNA ligase.